Reading from the N-terminus, the 435-residue chain is Cyclin-dependent kinase 15 (435 aa).

One can recognise a Protein kinase domain in the interval 103 to 387; sequence YLNLEKLGEG…AQEALVHDYF (285 aa). Residues 109–117 and lysine 132 contribute to the ATP site; that span reads LGEGSYATV. The active-site Proton acceptor is aspartate 224.

The protein belongs to the protein kinase superfamily. CMGC Ser/Thr protein kinase family. CDC2/CDKX subfamily. It depends on Mg(2+) as a cofactor.

The enzyme catalyses L-seryl-[protein] + ATP = O-phospho-L-seryl-[protein] + ADP + H(+). It catalyses the reaction L-threonyl-[protein] + ATP = O-phospho-L-threonyl-[protein] + ADP + H(+). In terms of biological role, serine/threonine-protein kinase that acts like an antiapoptotic protein that counters TRAIL/TNFSF10-induced apoptosis by inducing phosphorylation of BIRC5 at 'Thr-34'. This Homo sapiens (Human) protein is Cyclin-dependent kinase 15 (CDK15).